We begin with the raw amino-acid sequence, 383 residues long: Soluble hydrogenase 42 kDa subunit (383 aa).

Lys-194 carries the N6-(pyridoxal phosphate)lysine modification.

It belongs to the class-V pyridoxal-phosphate-dependent aminotransferase family. As to quaternary structure, heterodimer of a large and a small subunit. The cofactor is pyridoxal 5'-phosphate.

The protein localises to the cytoplasm. Soluble hydrogenase catalyzes both production and consumption of hydrogen from suitable artificial electron donors or acceptors. This subunit catalyzes the tritium-exchange activity. This Anabaena cylindrica protein is Soluble hydrogenase 42 kDa subunit.